A 38-amino-acid chain; its full sequence is Very early lactation protein (38 aa).

In terms of assembly, homodimer. In terms of processing, O-glycosylated. Contains sialic acid residues. In terms of tissue distribution, found in the whey fraction of milk (at protein level).

It is found in the secreted. In Trichosurus vulpecula (Brush-tailed possum), this protein is Very early lactation protein.